Here is a 106-residue protein sequence, read N- to C-terminus: Integration host factor subunit beta (106 aa).

The segment at 57–106 (PARAGRNPRTGEHVPVEQKSVPFFKTGKEMRERLNRDGLDGATPPSPPAA) is disordered. Residues 82-95 (TGKEMRERLNRDGL) show a composition bias toward basic and acidic residues.

This sequence belongs to the bacterial histone-like protein family. As to quaternary structure, heterodimer of an alpha and a beta chain.

Its function is as follows. This protein is one of the two subunits of integration host factor, a specific DNA-binding protein that functions in genetic recombination as well as in transcriptional and translational control. In Afipia carboxidovorans (strain ATCC 49405 / DSM 1227 / KCTC 32145 / OM5) (Oligotropha carboxidovorans), this protein is Integration host factor subunit beta.